A 124-amino-acid chain; its full sequence is Histone H2A, embryonic (124 aa).

Basic residues predominate over residues 1–18 (MSGRGKSGKARTKAKTRS). The segment at 1–21 (MSGRGKSGKARTKAKTRSSRA) is disordered. At serine 2 the chain carries N-acetylserine. A Phosphoserine modification is found at serine 2. At glutamine 104 the chain carries N5-methylglutamine. Residue lysine 119 forms a Glycyl lysine isopeptide (Lys-Gly) (interchain with G-Cter in ubiquitin) linkage.

This sequence belongs to the histone H2A family. The nucleosome is a histone octamer containing two molecules each of H2A, H2B, H3 and H4 assembled in one H3-H4 heterotetramer and two H2A-H2B heterodimers. The octamer wraps approximately 147 bp of DNA. In terms of processing, monoubiquitination of Lys-119 gives a specific tag for epigenetic transcriptional repression. Post-translationally, phosphorylation of Ser-2 directly represses transcription.

Its subcellular location is the nucleus. The protein localises to the chromosome. Its function is as follows. Core component of nucleosome. Nucleosomes wrap and compact DNA into chromatin, limiting DNA accessibility to the cellular machineries which require DNA as a template. Histones thereby play a central role in transcription regulation, DNA repair, DNA replication and chromosomal stability. DNA accessibility is regulated via a complex set of post-translational modifications of histones, also called histone code, and nucleosome remodeling. This is Histone H2A, embryonic from Psammechinus miliaris (Green sea urchin).